The sequence spans 447 residues: Trimethylamine monooxygenase (447 aa).

Positions 13, 38, 40, 46, 47, and 63 each coordinate FAD. Positions 71 and 73 each coordinate NADP(+). FAD-binding residues include N73 and V126. The NADP(+) site is built by Y173, A205, S206, S208, and R229. Residues Q318 and T321 each coordinate FAD. R413 serves as a coordination point for NADP(+).

The protein belongs to the FMO family. FAD is required as a cofactor.

It carries out the reaction trimethylamine + NADPH + O2 = trimethylamine N-oxide + NADP(+) + H2O. Catalyzes the oxidation of trimethylamine (TMA) to produce trimethylamine N-oxide (TMAO). TMA is the best substrate, but the enzyme can also oxidize methimazole, indole and dimethylamine (DMA). This chain is Trimethylamine monooxygenase, found in Roseovarius nubinhibens (strain ATCC BAA-591 / DSM 15170 / ISM).